The chain runs to 625 residues: Phosphomethylpyrimidine synthase (625 aa).

Residues Asn237, Met266, Tyr295, His331, 351-353 (SRG), 392-395 (DGLR), and Glu431 contribute to the substrate site. Residue His435 participates in Zn(2+) binding. Residue Tyr458 participates in substrate binding. His499 serves as a coordination point for Zn(2+). Residues Cys579, Cys582, and Cys587 each coordinate [4Fe-4S] cluster.

The protein belongs to the ThiC family. As to quaternary structure, homodimer. [4Fe-4S] cluster serves as cofactor.

The enzyme catalyses 5-amino-1-(5-phospho-beta-D-ribosyl)imidazole + S-adenosyl-L-methionine = 4-amino-2-methyl-5-(phosphooxymethyl)pyrimidine + CO + 5'-deoxyadenosine + formate + L-methionine + 3 H(+). It functions in the pathway cofactor biosynthesis; thiamine diphosphate biosynthesis. Functionally, catalyzes the synthesis of the hydroxymethylpyrimidine phosphate (HMP-P) moiety of thiamine from aminoimidazole ribotide (AIR) in a radical S-adenosyl-L-methionine (SAM)-dependent reaction. The chain is Phosphomethylpyrimidine synthase from Cupriavidus metallidurans (strain ATCC 43123 / DSM 2839 / NBRC 102507 / CH34) (Ralstonia metallidurans).